Reading from the N-terminus, the 69-residue chain is uncharacterized protein (69 aa).

A signal peptide spans 1–16; that stretch reads MSLGLIFALLLTHAAA.

This is an uncharacterized protein from Archaeoglobus fulgidus (strain ATCC 49558 / DSM 4304 / JCM 9628 / NBRC 100126 / VC-16).